Reading from the N-terminus, the 203-residue chain is TATA-binding protein 2 (203 aa).

Repeat copies occupy residues 28–104 (LQNI…ARII) and 118–195 (IQNI…YPVL).

It belongs to the TBP family. As to quaternary structure, belongs to the TFIID complex together with the TBP-associated factors (TAFs). Binds DNA as monomer. Interacts with RF2A and TFIIB. Interacts with CWZF7.

Its subcellular location is the nucleus. Functionally, general transcription factor that functions at the core of the DNA-binding multiprotein factor TFIID. Binding of TFIID to the TATA box is the initial transcriptional step of the pre-initiation complex (PIC), playing a role in the activation of eukaryotic genes transcribed by RNA polymerase II. This Oryza sativa subsp. japonica (Rice) protein is TATA-binding protein 2 (TBP2).